The primary structure comprises 540 residues: Upstream-binding protein 1 (540 aa).

At S22 the chain carries Phosphoserine. One can recognise a Grh/CP2 DB domain in the interval 60 to 296; the sequence is EHPPFQYVMC…EQKKSSKRTL (237 aa). Disordered regions lie at residues 236-270 and 285-368; these read KPKG…DTTI and EHEQ…QPSA. The segment covering 238–262 has biased composition (basic and acidic residues); it reads KGADRKQKTDREKMEKRTAHEKEKY. The segment covering 320 to 368 has biased composition (polar residues); the sequence is YVNNSPSPAPTFTSPQQSTCSVPDSNSSSPNHQGDGASQTSGEQIQPSA. A phosphoserine mark is found at S390 and S393.

The protein belongs to the grh/CP2 family. CP2 subfamily. In terms of assembly, interacts with TFCP2. Interacts with PIAS1, and is probably part of a complex containing TFCP2, UBP1 and PIAS1. Expressed in adrenal tissue, JEG-3, NCI-H295A, Hep-G2 and HeLa cell lines.

It localises to the nucleus. Functions as a transcriptional activator in a promoter context-dependent manner. Modulates the placental expression of CYP11A1. Involved in regulation of the alpha-globin gene in erythroid cells. Activation of the alpha-globin promoter in erythroid cells is via synergistic interaction with TFCP2. Involved in regulation of the alpha-globin gene in erythroid cells. Binds strongly to sequences around the HIV-1 initiation site and weakly over the TATA-box. Represses HIV-1 transcription by inhibiting the binding of TFIID to the TATA-box. The sequence is that of Upstream-binding protein 1 (UBP1) from Homo sapiens (Human).